The primary structure comprises 78 residues: Large ribosomal subunit protein bL28 (78 aa).

This sequence belongs to the bacterial ribosomal protein bL28 family.

This is Large ribosomal subunit protein bL28 from Proteus mirabilis (strain HI4320).